Consider the following 470-residue polypeptide: Methylenetetrahydrofolate--tRNA-(uracil-5-)-methyltransferase TrmFO (470 aa).

FAD is bound at residue 10-15; sequence GAGLAG.

This sequence belongs to the MnmG family. TrmFO subfamily. The cofactor is FAD.

The protein localises to the cytoplasm. The enzyme catalyses uridine(54) in tRNA + (6R)-5,10-methylene-5,6,7,8-tetrahydrofolate + NADH + H(+) = 5-methyluridine(54) in tRNA + (6S)-5,6,7,8-tetrahydrofolate + NAD(+). It catalyses the reaction uridine(54) in tRNA + (6R)-5,10-methylene-5,6,7,8-tetrahydrofolate + NADPH + H(+) = 5-methyluridine(54) in tRNA + (6S)-5,6,7,8-tetrahydrofolate + NADP(+). Catalyzes the folate-dependent formation of 5-methyl-uridine at position 54 (M-5-U54) in all tRNAs. This is Methylenetetrahydrofolate--tRNA-(uracil-5-)-methyltransferase TrmFO from Prochlorococcus marinus (strain MIT 9301).